A 277-amino-acid chain; its full sequence is Formamidopyrimidine-DNA glycosylase (277 aa).

Pro-2 functions as the Schiff-base intermediate with DNA in the catalytic mechanism. Glu-3 acts as the Proton donor in catalysis. Lys-60 serves as the catalytic Proton donor; for beta-elimination activity. DNA-binding residues include His-94, Arg-113, and Arg-158. The FPG-type zinc finger occupies 243-277 (WVYNRAGEPCKVCGDVIQRIKLGGRSSHFCRQCQV). Arg-267 functions as the Proton donor; for delta-elimination activity in the catalytic mechanism.

The protein belongs to the FPG family. In terms of assembly, monomer. The cofactor is Zn(2+).

It catalyses the reaction Hydrolysis of DNA containing ring-opened 7-methylguanine residues, releasing 2,6-diamino-4-hydroxy-5-(N-methyl)formamidopyrimidine.. It carries out the reaction 2'-deoxyribonucleotide-(2'-deoxyribose 5'-phosphate)-2'-deoxyribonucleotide-DNA = a 3'-end 2'-deoxyribonucleotide-(2,3-dehydro-2,3-deoxyribose 5'-phosphate)-DNA + a 5'-end 5'-phospho-2'-deoxyribonucleoside-DNA + H(+). In terms of biological role, involved in base excision repair of DNA damaged by oxidation or by mutagenic agents. Acts as a DNA glycosylase that recognizes and removes damaged bases. Has a preference for oxidized purines, such as 7,8-dihydro-8-oxoguanine (8-oxoG). Has AP (apurinic/apyrimidinic) lyase activity and introduces nicks in the DNA strand. Cleaves the DNA backbone by beta-delta elimination to generate a single-strand break at the site of the removed base with both 3'- and 5'-phosphates. The sequence is that of Formamidopyrimidine-DNA glycosylase from Trichormus variabilis (strain ATCC 29413 / PCC 7937) (Anabaena variabilis).